The following is a 756-amino-acid chain: U3 small nucleolar RNA-associated protein 14 homolog B (756 aa).

The interval 21-44 is disordered; that stretch reads DLPENYPLSTSEDEGDSDGEGKRQ. Ser29, Ser31, and Ser37 each carry phosphoserine. Coiled-coil stretches lie at residues 215 to 244 and 316 to 345; these read SLEEAKIRRAELQRMRALQSYYEARARREK and PEARKAMQEQLAKNRELTQKLQVVSESEEE. 2 stretches are compositionally biased toward basic and acidic residues: residues 419-428 and 452-468; these read KERSFQERVD and LNKESHQSDNQKVSSEE. Disordered regions lie at residues 419–468 and 497–539; these read KERS…SSEE and QQGE…KKKK. The stretch at 449–476 forms a coiled coil; it reads LQKLNKESHQSDNQKVSSEENVLHIQRE. Ser554 is modified (phosphoserine).

This sequence belongs to the UTP14 family. In terms of tissue distribution, expressed predominantly in germ cells of the testis; weakly expressed in brain.

Its subcellular location is the nucleus. The protein resides in the nucleolus. Functionally, essential for spermatogenesis. May be required specifically for ribosome biogenesis and hence protein synthesis during male meiosis. This chain is U3 small nucleolar RNA-associated protein 14 homolog B (Utp14b), found in Mus musculus (Mouse).